The primary structure comprises 253 residues: MDYSNFGNSASKKFQDDTLNRVRKEHEEALKKLREENFSSNTSELGNKKHYRAQERMSSPLHRLSPTGKSDDRKVKSPLDDKLRRQLREGNTRLPPPPFSSYGMPPTNRSNLDRIRRRTSSPVRTDKFASQNVIDDQRLEIKYLERIVYDQGTVIDNLTSRITRLESFILNSISDRGDKNFASLEHSRSFSGFPTNKTYGLQMGGLYENDMPYRRSSDNINKEGAREDRSSQIHIENESTEDILKILSSSFHN.

The segment covering 1-12 (MDYSNFGNSASK) has biased composition (polar residues). Disordered stretches follow at residues 1–20 (MDYS…DTLN), 31–123 (KKLR…SSPV), and 210–231 (DMPY…DRSS). Threonine 18 bears the Phosphothreonine mark. Phosphoserine is present on serine 65. Basic and acidic residues-rich tracts occupy residues 69 to 91 (KSDD…REGN) and 211 to 231 (MPYR…DRSS). Threonine 240 is modified (phosphothreonine; by MPS1).

Belongs to the SPC29 family. In terms of assembly, component of the SPC110 complex containing at least CMD1, SPC29, SPC42 and SCP110. Interacts with BBP1. Post-translationally, MPS1-mediated phosphorylation at Thr-240 is required for spindle pole body duplication.

It localises to the nucleus. Its subcellular location is the cytoplasm. It is found in the cytoskeleton. The protein localises to the microtubule organizing center. The protein resides in the spindle pole body. Component of the spindle pole body (SPB) required for the proper execution of spindle pole body (SPB) duplication. Links the central plaque component SPC42 to the inner plaque component SPC110. The polypeptide is Spindle pole component 29 (SPC29) (Saccharomyces cerevisiae (strain RM11-1a) (Baker's yeast)).